The sequence spans 125 residues: Small ribosomal subunit protein uS13 (125 aa).

The disordered stretch occupies residues 92-125 (RHRRGLPVRGQRTRTNARTRKGKKKTVGAQAKKK).

The protein belongs to the universal ribosomal protein uS13 family. In terms of assembly, part of the 30S ribosomal subunit. Forms a loose heterodimer with protein S19. Forms two bridges to the 50S subunit in the 70S ribosome.

Located at the top of the head of the 30S subunit, it contacts several helices of the 16S rRNA. In the 70S ribosome it contacts the 23S rRNA (bridge B1a) and protein L5 of the 50S subunit (bridge B1b), connecting the 2 subunits; these bridges are implicated in subunit movement. Contacts the tRNAs in the A and P-sites. The chain is Small ribosomal subunit protein uS13 from Akkermansia muciniphila (strain ATCC BAA-835 / DSM 22959 / JCM 33894 / BCRC 81048 / CCUG 64013 / CIP 107961 / Muc).